A 253-amino-acid polypeptide reads, in one-letter code: Large ribosomal subunit protein uL2C (253 aa).

It belongs to the universal ribosomal protein uL2 family. In terms of assembly, component of the large ribosomal subunit (LSU). Mature yeast ribosomes consist of a small (40S) and a large (60S) subunit. The 40S small subunit contains 1 molecule of ribosomal RNA (18S rRNA) and at least 33 different proteins. The large 60S subunit contains 3 rRNA molecules (25S, 5.8S and 5S rRNA) and at least 46 different proteins.

It localises to the cytoplasm. It is found in the nucleus. In terms of biological role, component of the ribosome, a large ribonucleoprotein complex responsible for the synthesis of proteins in the cell. The small ribosomal subunit (SSU) binds messenger RNAs (mRNAs) and translates the encoded message by selecting cognate aminoacyl-transfer RNA (tRNA) molecules. The large subunit (LSU) contains the ribosomal catalytic site termed the peptidyl transferase center (PTC), which catalyzes the formation of peptide bonds, thereby polymerizing the amino acids delivered by tRNAs into a polypeptide chain. The nascent polypeptides leave the ribosome through a tunnel in the LSU and interact with protein factors that function in enzymatic processing, targeting, and the membrane insertion of nascent chains at the exit of the ribosomal tunnel. This is Large ribosomal subunit protein uL2C (rpl803) from Schizosaccharomyces pombe (strain 972 / ATCC 24843) (Fission yeast).